Consider the following 446-residue polypeptide: MGHGLSCSRDTDEYDLFRAAQLGDIHALSALLAADPALARRATVYDRFTALHIAAANGRLQVLSMLLDRDGDVDVLSRKKQTPLMVAAMRGNTECVVRLLRGGANVLTFDSPRARTCLHHAAYYGHAECLQAILGAAAQAQGPVAASWGFARFVNVRDERGATPLHLAARHARASCVRLLLDKGAIVSAPTAVYGFPGSTALHLAARAGSMECIRELLAWGADRLQRDSAGRIAYAVAMRRGHRACAALLNPAAAEPIVWPSPLKFIGELEADAKALLEAALMEANREREKRILHGSDINIKGGDEEEESEDEEEACNICFEQACSMEVKECGHQMCAACTLAICCHSKPNPKTLLLHPPACPFCRTTISRLVVATTNSNKTNSRRRSRSRSSSFKGGLSSAMGSFSRIGRGSGRLVVDGSSVGELADKPDHDFSSVAAAAAICDT.

5 ANK repeats span residues 46-75 (DRFT…DVDV), 79-108 (KKQT…NVLT), 113-142 (RART…QAQG), 160-189 (RGAT…IVSA), and 197-227 (PGST…RLQR). Residues 317-366 (CNICFEQACSMEVKECGHQMCAACTLAICCHSKPNPKTLLLHPPACPFCR) form an RING-type zinc finger. The tract at residues 376-401 (TTNSNKTNSRRRSRSRSSSFKGGLSS) is disordered.

The enzyme catalyses S-ubiquitinyl-[E2 ubiquitin-conjugating enzyme]-L-cysteine + [acceptor protein]-L-lysine = [E2 ubiquitin-conjugating enzyme]-L-cysteine + N(6)-ubiquitinyl-[acceptor protein]-L-lysine.. It functions in the pathway protein modification; protein ubiquitination. In Oryza sativa subsp. japonica (Rice), this protein is Probable E3 ubiquitin-protein ligase XBOS31 (XBOS31).